A 40-amino-acid polypeptide reads, in one-letter code: Photosystem II reaction center protein J (40 aa).

A helical membrane pass occupies residues 8–28; it reads IPLWVVATIAGLGVITVVGIF.

It belongs to the PsbJ family. PSII is composed of 1 copy each of membrane proteins PsbA, PsbB, PsbC, PsbD, PsbE, PsbF, PsbH, PsbI, PsbJ, PsbK, PsbL, PsbM, PsbT, PsbX, PsbY, PsbZ, Psb30/Ycf12, peripheral proteins PsbO, CyanoQ (PsbQ), PsbU, PsbV and a large number of cofactors. It forms dimeric complexes.

The protein resides in the cellular thylakoid membrane. Functionally, one of the components of the core complex of photosystem II (PSII). PSII is a light-driven water:plastoquinone oxidoreductase that uses light energy to abstract electrons from H(2)O, generating O(2) and a proton gradient subsequently used for ATP formation. It consists of a core antenna complex that captures photons, and an electron transfer chain that converts photonic excitation into a charge separation. This Nostoc sp. (strain PCC 7120 / SAG 25.82 / UTEX 2576) protein is Photosystem II reaction center protein J.